The primary structure comprises 435 residues: MSDSEGGLASEVEHEKRSRSTSNRPNYAIDTEDLDIDENDENEDDDYREEEANEGVNEEEISDEEEQINKSGRNKRRHVDEEEDLSEDKGVTRSRNRSKFKKPVFPGIDDAEENLNPLKVVNEEYVLPDDPEGETKITADGDLLGGREFLVRTFTLTEKGNRKFMLATEPARIVGFRDSYLFFQTHPNLYKFILNQTQKNDLIDRGVLPYSYRNRQIALVTARGVFKEFGAKIIRGGKHITDDYYASELRTKGNVIEGKLAGDPIDKSARALETMMYPASENGINPAKNQVEFFEHRPHGHMSNSNIIASGSKLSSTNWLYQHSAACSRFNSDLFYDRVKVLLVDQQGLRDAYTNILHIPESTQSTTVLGWRRSKNDSPSDTSIVYETVIHDNDLNKPKTGLSEIPKEIYEDVVDEDVLRAITEQQNFEKCNEYI.

Residues 1–97 (MSDSEGGLAS…DKGVTRSRNR (97 aa)) are disordered. A compositionally biased stretch (acidic residues) spans 30–66 (DTEDLDIDENDENEDDDYREEEANEGVNEEEISDEEE). The residue at position 86 (serine 86) is a Phosphoserine. Positions 248–435 (ELRTKGNVIE…QNFEKCNEYI (188 aa)) are functional region; able to complement all NPL6 null allele phenotypes.

Belongs to the RSC7/SWP82 family. RSC7 subfamily. As to quaternary structure, interacts with ARP7, ARP9, RSC3, RSC8, RSC30 and STH1. Component of the two forms of the RSC complex composed of at least either RSC1 or RSC2, and ARP7, ARP9, LDB7, NPL6, RSC3, RSC30, RSC4, RSC58, RSC6, RSC8, RSC9, SFH1, STH1, HTL1 and probably RTT102. The complexes interact with histone and histone variant components of centromeric chromatin. Component of a fungal-specific module (HTL1-LDB7-NPL6-RSC3-RSC30) within the RSC complex.

It localises to the nucleus. Its function is as follows. Component of the chromatin structure remodeling complex (RSC), which is involved in transcription regulation and nucleosome positioning. RSC is responsible for the transfer of a histone octamer from a nucleosome core particle to naked DNA. The reaction requires ATP and involves an activated RSC-nucleosome intermediate. Remodeling reaction also involves DNA translocation, DNA twist and conformational change. As a reconfigurer of centromeric and flanking nucleosomes, RSC complex is required both for proper kinetochore function in chromosome segregation and, via a PKC1-dependent signaling pathway, for organization of the cellular cytoskeleton. Together with HTL1, LDB7, RSC3, RSC30 components, defines a fungal-specific module within the RSC complex that plays a role in many cellular functions including the maintenance of cell wall integrity. Acidic protein important for nuclear protein localization. The protein is Chromatin structure-remodeling complex subunit RSC7 (NPL6) of Saccharomyces cerevisiae (strain ATCC 204508 / S288c) (Baker's yeast).